Here is a 91-residue protein sequence, read N- to C-terminus: Large ribosomal subunit protein bL27 (91 aa).

This sequence belongs to the bacterial ribosomal protein bL27 family. As to quaternary structure, part of the 50S ribosomal subunit. Contacts protein L18.

Its function is as follows. Binds the 5S and 23S rRNAs and also the tRNA in the P site. The polypeptide is Large ribosomal subunit protein bL27 (rpmA) (Deinococcus radiodurans (strain ATCC 13939 / DSM 20539 / JCM 16871 / CCUG 27074 / LMG 4051 / NBRC 15346 / NCIMB 9279 / VKM B-1422 / R1)).